The sequence spans 512 residues: Activin receptor type-2B (512 aa).

The signal sequence occupies residues 1–18 (MTAPWVALALLWGSLCAG). Residues 19–137 (SGRGEAETRE…PPPTAPTLLT (119 aa)) lie on the Extracellular side of the membrane. 5 cysteine pairs are disulfide-bonded: C29–C59, C49–C77, C84–C103, C90–C102, and C104–C109. 2 N-linked (GlcNAc...) asparagine glycosylation sites follow: N42 and N65. The helical transmembrane segment at 138 to 158 (VLAYSLLPIGGLSLIVLLAFW) threads the bilayer. Residues 159 to 512 (MYRHRKPPYG…VDLPPKESSI (354 aa)) lie on the Cytoplasmic side of the membrane. A Protein kinase domain is found at 190–480 (LQLLEIKARG…AGCVEERVSL (291 aa)). ATP-binding positions include 196-204 (KARGRFGCV) and K217. The active-site Proton acceptor is D321. The interval 491-512 (DCLVSLVTSVTNVDLPPKESSI) is interaction with DYNLT1.

It belongs to the protein kinase superfamily. TKL Ser/Thr protein kinase family. TGFB receptor subfamily. As to quaternary structure, forms an activin receptor complex with activin type II receptors such as ACVR1B. Interacts with VPS39. Interacts with DYNLT1. Interacts with BMP3. Interacts with BMP2. Interacts with BMP6. Mg(2+) is required as a cofactor. It depends on Mn(2+) as a cofactor. Phosphorylated. Constitutive phosphorylation is in part catalyzed by its own kinase activity.

The protein resides in the cell membrane. It carries out the reaction L-threonyl-[receptor-protein] + ATP = O-phospho-L-threonyl-[receptor-protein] + ADP + H(+). The catalysed reaction is L-seryl-[receptor-protein] + ATP = O-phospho-L-seryl-[receptor-protein] + ADP + H(+). Transmembrane serine/threonine kinase activin type-2 receptor forming an activin receptor complex with activin type-1 serine/threonine kinase receptors (ACVR1, ACVR1B or ACVR1c). Transduces the activin signal from the cell surface to the cytoplasm and is thus regulating many physiological and pathological processes including neuronal differentiation and neuronal survival, hair follicle development and cycling, FSH production by the pituitary gland, wound healing, extracellular matrix production, immunosuppression and carcinogenesis. Activin is also thought to have a paracrine or autocrine role in follicular development in the ovary. Within the receptor complex, the type-2 receptors act as a primary activin receptors (binds activin-A/INHBA, activin-B/INHBB as well as inhibin-A/INHA-INHBA). The type-1 receptors like ACVR1B act as downstream transducers of activin signals. Activin binds to type-2 receptor at the plasma membrane and activates its serine-threonine kinase. The activated receptor type-2 then phosphorylates and activates the type-1 receptor. Once activated, the type-1 receptor binds and phosphorylates the SMAD proteins SMAD2 and SMAD3, on serine residues of the C-terminal tail. Soon after their association with the activin receptor and subsequent phosphorylation, SMAD2 and SMAD3 are released into the cytoplasm where they interact with the common partner SMAD4. This SMAD complex translocates into the nucleus where it mediates activin-induced transcription. Inhibitory SMAD7, which is recruited to ACVR1B through FKBP1A, can prevent the association of SMAD2 and SMAD3 with the activin receptor complex, thereby blocking the activin signal. Activin signal transduction is also antagonized by the binding to the receptor of inhibin-B via the IGSF1 inhibin coreceptor. In Homo sapiens (Human), this protein is Activin receptor type-2B (ACVR2B).